The following is a 281-amino-acid chain: Release factor glutamine methyltransferase (281 aa).

2 residues coordinate S-adenosyl-L-methionine: glutamate 141 and asparagine 185. Residue 185 to 188 participates in substrate binding; it reads NPPY.

This sequence belongs to the protein N5-glutamine methyltransferase family. PrmC subfamily.

It carries out the reaction L-glutaminyl-[peptide chain release factor] + S-adenosyl-L-methionine = N(5)-methyl-L-glutaminyl-[peptide chain release factor] + S-adenosyl-L-homocysteine + H(+). Functionally, methylates the class 1 translation termination release factors RF1/PrfA and RF2/PrfB on the glutamine residue of the universally conserved GGQ motif. The protein is Release factor glutamine methyltransferase of Mycolicibacterium smegmatis (strain ATCC 700084 / mc(2)155) (Mycobacterium smegmatis).